The chain runs to 498 residues: Protein nucleotidyltransferase YdiU (498 aa).

8 residues coordinate ATP: Gly-88, Gly-90, Arg-91, Lys-111, Asp-123, Gly-124, Arg-174, and Arg-181. The Proton acceptor role is filled by Asp-250. Positions 251 and 260 each coordinate Mg(2+). Asp-260 is an ATP binding site.

This sequence belongs to the SELO family. It depends on Mg(2+) as a cofactor. Mn(2+) is required as a cofactor.

The enzyme catalyses L-seryl-[protein] + ATP = 3-O-(5'-adenylyl)-L-seryl-[protein] + diphosphate. The catalysed reaction is L-threonyl-[protein] + ATP = 3-O-(5'-adenylyl)-L-threonyl-[protein] + diphosphate. It carries out the reaction L-tyrosyl-[protein] + ATP = O-(5'-adenylyl)-L-tyrosyl-[protein] + diphosphate. It catalyses the reaction L-histidyl-[protein] + UTP = N(tele)-(5'-uridylyl)-L-histidyl-[protein] + diphosphate. The enzyme catalyses L-seryl-[protein] + UTP = O-(5'-uridylyl)-L-seryl-[protein] + diphosphate. The catalysed reaction is L-tyrosyl-[protein] + UTP = O-(5'-uridylyl)-L-tyrosyl-[protein] + diphosphate. Functionally, nucleotidyltransferase involved in the post-translational modification of proteins. It can catalyze the addition of adenosine monophosphate (AMP) or uridine monophosphate (UMP) to a protein, resulting in modifications known as AMPylation and UMPylation. In Methylorubrum populi (strain ATCC BAA-705 / NCIMB 13946 / BJ001) (Methylobacterium populi), this protein is Protein nucleotidyltransferase YdiU.